Here is a 125-residue protein sequence, read N- to C-terminus: S-adenosylmethionine decarboxylase proenzyme (125 aa).

Catalysis depends on S63, which acts as the Schiff-base intermediate with substrate; via pyruvic acid. Position 63 is a pyruvic acid (Ser); by autocatalysis (S63). The active-site Proton acceptor; for processing activity is H68. The active-site Proton donor; for catalytic activity is the C83.

This sequence belongs to the prokaryotic AdoMetDC family. Type 1 subfamily. Heterotetramer of two alpha and two beta chains arranged as a dimer of alpha/beta heterodimers. Pyruvate serves as cofactor. In terms of processing, is synthesized initially as an inactive proenzyme. Formation of the active enzyme involves a self-maturation process in which the active site pyruvoyl group is generated from an internal serine residue via an autocatalytic post-translational modification. Two non-identical subunits are generated from the proenzyme in this reaction, and the pyruvate is formed at the N-terminus of the alpha chain, which is derived from the carboxyl end of the proenzyme. The post-translation cleavage follows an unusual pathway, termed non-hydrolytic serinolysis, in which the side chain hydroxyl group of the serine supplies its oxygen atom to form the C-terminus of the beta chain, while the remainder of the serine residue undergoes an oxidative deamination to produce ammonia and the pyruvoyl group blocking the N-terminus of the alpha chain.

The enzyme catalyses S-adenosyl-L-methionine + H(+) = S-adenosyl 3-(methylsulfanyl)propylamine + CO2. Its pathway is amine and polyamine biosynthesis; S-adenosylmethioninamine biosynthesis; S-adenosylmethioninamine from S-adenosyl-L-methionine: step 1/1. In terms of biological role, catalyzes the decarboxylation of S-adenosylmethionine to S-adenosylmethioninamine (dcAdoMet), the propylamine donor required for the synthesis of the polyamines spermine and spermidine from the diamine putrescine. The sequence is that of S-adenosylmethionine decarboxylase proenzyme from Moorella thermoacetica (strain ATCC 39073 / JCM 9320).